Reading from the N-terminus, the 192-residue chain is Pyridoxal 5'-phosphate synthase subunit PdxT (192 aa).

46–48 (GES) is an L-glutamine binding site. The Nucleophile role is filled by Cys-78. L-glutamine-binding positions include Arg-106 and 135-136 (IR). Residues His-171 and Glu-173 each act as charge relay system in the active site.

The protein belongs to the glutaminase PdxT/SNO family. In terms of assembly, in the presence of PdxS, forms a dodecamer of heterodimers. Only shows activity in the heterodimer.

It carries out the reaction aldehydo-D-ribose 5-phosphate + D-glyceraldehyde 3-phosphate + L-glutamine = pyridoxal 5'-phosphate + L-glutamate + phosphate + 3 H2O + H(+). The enzyme catalyses L-glutamine + H2O = L-glutamate + NH4(+). It participates in cofactor biosynthesis; pyridoxal 5'-phosphate biosynthesis. Functionally, catalyzes the hydrolysis of glutamine to glutamate and ammonia as part of the biosynthesis of pyridoxal 5'-phosphate. The resulting ammonia molecule is channeled to the active site of PdxS. This Kosmotoga olearia (strain ATCC BAA-1733 / DSM 21960 / TBF 19.5.1) protein is Pyridoxal 5'-phosphate synthase subunit PdxT.